Here is a 104-residue protein sequence, read N- to C-terminus: UPF0213 protein YsiG (104 aa).

One can recognise a GIY-YIG domain in the interval 2–79 (NQYFTYILQC…KLVRKQKLSL (78 aa)).

Belongs to the UPF0213 family.

This chain is UPF0213 protein YsiG (ysiG), found in Lactococcus lactis subsp. lactis (strain IL1403) (Streptococcus lactis).